Reading from the N-terminus, the 257-residue chain is Phosphatidylglycerol--prolipoprotein diacylglyceryl transferase (257 aa).

The next 4 helical transmembrane spans lie at 12–32 (FSIRWYAICIVSGMLLAVYLA), 49–69 (FILMAFPLSIVGARIYYVIFE), 83–103 (IWNGGIAIYGGLITGAILLVI), and 109–129 (LINPIDFLDIAAPGVMIAQAI). R131 contributes to the a 1,2-diacyl-sn-glycero-3-phospho-(1'-sn-glycerol) binding site. Helical transmembrane passes span 167–187 (VPTFLYESLWNFLGFVIIMSI), 197–217 (GEVACFYLVWYGCGRFIIEGM), and 226–246 (GLRVSQWLSVILVIIGIVMII).

The protein belongs to the Lgt family.

The protein resides in the cell membrane. It catalyses the reaction L-cysteinyl-[prolipoprotein] + a 1,2-diacyl-sn-glycero-3-phospho-(1'-sn-glycerol) = an S-1,2-diacyl-sn-glyceryl-L-cysteinyl-[prolipoprotein] + sn-glycerol 1-phosphate + H(+). Its pathway is protein modification; lipoprotein biosynthesis (diacylglyceryl transfer). In terms of biological role, catalyzes the transfer of the diacylglyceryl group from phosphatidylglycerol to the sulfhydryl group of the N-terminal cysteine of a prolipoprotein, the first step in the formation of mature lipoproteins. The sequence is that of Phosphatidylglycerol--prolipoprotein diacylglyceryl transferase from Streptococcus agalactiae serotype Ia (strain ATCC 27591 / A909 / CDC SS700).